We begin with the raw amino-acid sequence, 779 residues long: Transcriptional regulator QRICH1 (779 aa).

Methionine 1 carries the N-acetylmethionine modification. The region spanning 6-48 is the CARD domain; sequence ENTISFEEYIRVKARSVPQHRMKEFLDSLASKGPEALQEFQQT. Disordered stretches follow at residues 141-163 and 219-242; these read QGQA…PSPS and ALSP…TASV. A Phosphoserine modification is found at serine 346. Residues lysine 354 and lysine 359 each participate in a glycyl lysine isopeptide (Lys-Gly) (interchain with G-Cter in SUMO2) cross-link. The span at 420–430 shows a compositional bias: low complexity; it reads QQQPQQQTPQE. The disordered stretch occupies residues 420–443; that stretch reads QQQPQQQTPQEQTPPPPQQQQQQQ. Serine 467 is subject to Phosphoserine.

It is found in the nucleus. The protein localises to the cytoplasm. Its subcellular location is the cell membrane. Its function is as follows. Transcriptional regulator that acts as a mediator of the integrated stress response (ISR) through transcriptional control of protein homeostasis under conditions of ER stress. Controls the outcome of the unfolded protein response (UPR), an ER-stress response pathway that either promotes recovery of ER homeostasis and cell survival, or triggers the terminal UPR which elicits programmed cell death when ER stress is prolonged and unresolved. ER stress induces QRICH1 translation by a ribosome translation re-initiation mechanism in response to EIF2S1/eIF-2-alpha phosphorylation, and stress-induced QRICH1 regulates a transcriptional program associated with protein translation, protein secretion-mediated proteotoxicity and cell death during the terminal UPR. May cooperate with ATF4 transcription factor signaling to regulate ER homeostasis which is critical for cell viability. Up-regulates CASP3/caspase-3 activity in epithelial cells under ER stress. Central regulator of proteotoxicity associated with ER stress-mediated inflammatory diseases in the intestines and liver. Involved in chondrocyte hypertrophy, a process required for normal longitudinal bone growth. In Bos taurus (Bovine), this protein is Transcriptional regulator QRICH1 (QRICH1).